The sequence spans 216 residues: Peroxiredoxin (216 aa).

In terms of domain architecture, Thioredoxin spans 2–158; the sequence is VVIGEKFPEV…ILRLVKALKI (157 aa). C46 serves as the catalytic Cysteine sulfenic acid (-SOH) intermediate. R121 is a binding site for substrate. A disulfide bridge links C205 with C211.

It belongs to the peroxiredoxin family. Prx6 subfamily. In terms of assembly, homodecamer. Pentamer of dimers that assemble into a ring structure.

The protein resides in the cytoplasm. It carries out the reaction a hydroperoxide + [thioredoxin]-dithiol = an alcohol + [thioredoxin]-disulfide + H2O. Thiol-specific peroxidase that catalyzes the reduction of hydrogen peroxide and organic hydroperoxides to water and alcohols, respectively. Plays a role in cell protection against oxidative stress by detoxifying peroxides. The chain is Peroxiredoxin from Pyrococcus abyssi (strain GE5 / Orsay).